We begin with the raw amino-acid sequence, 406 residues long: Tryptophan synthase beta chain (406 aa).

Lysine 99 bears the N6-(pyridoxal phosphate)lysine mark.

Belongs to the TrpB family. Tetramer of two alpha and two beta chains. Pyridoxal 5'-phosphate is required as a cofactor.

It catalyses the reaction (1S,2R)-1-C-(indol-3-yl)glycerol 3-phosphate + L-serine = D-glyceraldehyde 3-phosphate + L-tryptophan + H2O. It functions in the pathway amino-acid biosynthesis; L-tryptophan biosynthesis; L-tryptophan from chorismate: step 5/5. In terms of biological role, the beta subunit is responsible for the synthesis of L-tryptophan from indole and L-serine. This is Tryptophan synthase beta chain from Sinorhizobium fredii (strain NBRC 101917 / NGR234).